Here is a 1399-residue protein sequence, read N- to C-terminus: DNA-directed RNA polymerase subunit beta' (1399 aa).

Cys70, Cys72, Cys85, and Cys88 together coordinate Zn(2+). Mg(2+) is bound by residues Asp460, Asp462, and Asp464. Residues Cys814, Cys888, Cys895, and Cys898 each coordinate Zn(2+).

It belongs to the RNA polymerase beta' chain family. As to quaternary structure, the RNAP catalytic core consists of 2 alpha, 1 beta, 1 beta' and 1 omega subunit. When a sigma factor is associated with the core the holoenzyme is formed, which can initiate transcription. The cofactor is Mg(2+). Zn(2+) is required as a cofactor.

The catalysed reaction is RNA(n) + a ribonucleoside 5'-triphosphate = RNA(n+1) + diphosphate. Its function is as follows. DNA-dependent RNA polymerase catalyzes the transcription of DNA into RNA using the four ribonucleoside triphosphates as substrates. In Pseudomonas fluorescens (strain ATCC BAA-477 / NRRL B-23932 / Pf-5), this protein is DNA-directed RNA polymerase subunit beta'.